The sequence spans 500 residues: NF-kappa-B inhibitor cactus (500 aa).

Residues 1 to 43 (MPSPTKAAEAATKATATSDCSCSAASVEQRAPSNAANPSSSLA) are compositionally biased toward low complexity. 2 disordered regions span residues 1–148 (MPSP…MRLK) and 171–212 (LNNL…APPS). Ser45 carries the post-translational modification Phosphoserine; by PKC. Positions 69–86 (NETSDSGFISGPQSSQIF) are enriched in polar residues. The segment covering 118–130 (IIDEEEDQEEQEK) has biased composition (acidic residues). Ser144 bears the Phosphoserine; by PKC mark. Residues 171-189 (LNNLGQSSSTQITGRSKVQ) are compositionally biased toward polar residues. A Phosphothreonine; by PKC modification is found at Thr183. The segment covering 190–212 (SSTASTANANPSGSGATSSAPPS) has biased composition (low complexity). ANK repeat units follow at residues 229-261 (DGDT…LLNI), 265-294 (VAQT…EPTV), 298-327 (HGNT…ATEI), 361-390 (DGER…DINA), and 395-424 (SGRT…KLNL). A phosphothreonine; by PKC mark is found at Thr293 and Thr319. A Phosphoserine; by PKC modification is found at Ser395.

Belongs to the NF-kappa-B inhibitor family. Phosphorylated isoform A binds to dorsal (dl); inhibits dl translocation to the nucleus and therefore from binding to DNA. In vitro, interacts with IKKbeta. Interacts with cactin and kappa-B-Ras. Activated IKKbeta phosphorylates cact. Expressed in ovary (at protein level).

Its subcellular location is the cytoplasm. Functionally, involved in the formation of the dorsoventral pattern. It inhibits nuclear translocation of the dorsal morphogen in the dorsal region of the embryo. Acts as a negative regulator of the NF-kappa-B (rel) signaling pathway. Cact is degraded by IKKbeta, this is essential for NF-kappa-B (rel) activation. This is NF-kappa-B inhibitor cactus (cact) from Drosophila melanogaster (Fruit fly).